Here is a 162-residue protein sequence, read N- to C-terminus: Single-stranded DNA-binding protein 1 (162 aa).

The region spanning 5-110 (LNKVMLIGHL…IVCTDMQMLG (106 aa)) is the SSB domain. The disordered stretch occupies residues 110 to 162 (GAKDSGGGTSDASYSQNRPSYSRPSRPEPSSGNYGASPSSGGAQEFEKDDLPF). Over residues 122 to 140 (SYSQNRPSYSRPSRPEPSS) the composition is skewed to low complexity. Polar residues predominate over residues 141–151 (GNYGASPSSGG).

In terms of assembly, homotetramer.

This chain is Single-stranded DNA-binding protein 1 (ssb1), found in Chlorobaculum tepidum (strain ATCC 49652 / DSM 12025 / NBRC 103806 / TLS) (Chlorobium tepidum).